The sequence spans 408 residues: Multifunctional CCA protein (408 aa).

G8 and R11 together coordinate ATP. 2 residues coordinate CTP: G8 and R11. The Mg(2+) site is built by D21 and D23. Positions 91, 137, and 140 each coordinate ATP. Positions 91, 137, and 140 each coordinate CTP. The HD domain maps to 228 to 329 (TGVHVLSVLE…LELLQSFDVY (102 aa)).

Belongs to the tRNA nucleotidyltransferase/poly(A) polymerase family. Bacterial CCA-adding enzyme type 1 subfamily. Monomer. Can also form homodimers and oligomers. It depends on Mg(2+) as a cofactor. The cofactor is Ni(2+).

The enzyme catalyses a tRNA precursor + 2 CTP + ATP = a tRNA with a 3' CCA end + 3 diphosphate. The catalysed reaction is a tRNA with a 3' CCA end + 2 CTP + ATP = a tRNA with a 3' CCACCA end + 3 diphosphate. Catalyzes the addition and repair of the essential 3'-terminal CCA sequence in tRNAs without using a nucleic acid template. Adds these three nucleotides in the order of C, C, and A to the tRNA nucleotide-73, using CTP and ATP as substrates and producing inorganic pyrophosphate. tRNA 3'-terminal CCA addition is required both for tRNA processing and repair. Also involved in tRNA surveillance by mediating tandem CCA addition to generate a CCACCA at the 3' terminus of unstable tRNAs. While stable tRNAs receive only 3'-terminal CCA, unstable tRNAs are marked with CCACCA and rapidly degraded. This is Multifunctional CCA protein from Pseudomonas syringae pv. syringae (strain B728a).